We begin with the raw amino-acid sequence, 197 residues long: OV-16 antigen (197 aa).

Residues 1–16 (MHCLQVVIAIVLYSFG) form the signal peptide. 4 N-linked (GlcNAc...) asparagine glycosylation sites follow: Asn56, Asn61, Asn119, and Asn124.

This sequence belongs to the phosphatidylethanolamine-binding protein family. In terms of tissue distribution, hypodermis, cuticle and uterus.

This Onchocerca volvulus protein is OV-16 antigen (OV16).